Consider the following 312-residue polypeptide: Metaxin-1 homolog (312 aa).

Residues isoleucine 282–isoleucine 302 traverse the membrane as a helical segment.

The protein belongs to the metaxin family. Associates with the mitochondrial contact site and cristae organizing system (MICOS) complex (also known as MINOS or MitOS complex).

It is found in the mitochondrion outer membrane. Involved in transport of proteins into the mitochondrion. Essential for embryonic development. This Caenorhabditis briggsae protein is Metaxin-1 homolog.